The chain runs to 95 residues: Aspartyl/glutamyl-tRNA(Asn/Gln) amidotransferase subunit C (95 aa).

Belongs to the GatC family. Heterotrimer of A, B and C subunits.

It carries out the reaction L-glutamyl-tRNA(Gln) + L-glutamine + ATP + H2O = L-glutaminyl-tRNA(Gln) + L-glutamate + ADP + phosphate + H(+). It catalyses the reaction L-aspartyl-tRNA(Asn) + L-glutamine + ATP + H2O = L-asparaginyl-tRNA(Asn) + L-glutamate + ADP + phosphate + 2 H(+). Allows the formation of correctly charged Asn-tRNA(Asn) or Gln-tRNA(Gln) through the transamidation of misacylated Asp-tRNA(Asn) or Glu-tRNA(Gln) in organisms which lack either or both of asparaginyl-tRNA or glutaminyl-tRNA synthetases. The reaction takes place in the presence of glutamine and ATP through an activated phospho-Asp-tRNA(Asn) or phospho-Glu-tRNA(Gln). The chain is Aspartyl/glutamyl-tRNA(Asn/Gln) amidotransferase subunit C from Pseudomonas putida (strain W619).